Consider the following 130-residue polypeptide: Small ribosomal subunit protein uS8 (130 aa).

Belongs to the universal ribosomal protein uS8 family. As to quaternary structure, part of the 30S ribosomal subunit. Contacts proteins S5 and S12.

Functionally, one of the primary rRNA binding proteins, it binds directly to 16S rRNA central domain where it helps coordinate assembly of the platform of the 30S subunit. The chain is Small ribosomal subunit protein uS8 from Pseudoalteromonas atlantica (strain T6c / ATCC BAA-1087).